The following is a 223-amino-acid chain: MEVKDILKTVDHTLLATTATWPEIQTILDDAMAYETASACIPASYVKKAAEYVSGKLAICTVIGFPNGYSTTAAKVFECEDAIKNGADEIDMVINLTDVKNGDFDTVEEEIRQIKAACQDHILKVIVETCQLTKEELIELCGVVTRSGADFIKTSTGFSTAGATFEDVEVMAKYVGEGVKIKAAGGISSLEDAETFIALGASRLGTSRIIKIVKNEATKTDSY.

D91 serves as the catalytic Proton donor/acceptor. The active-site Schiff-base intermediate with acetaldehyde is the K153. K182 acts as the Proton donor/acceptor in catalysis.

The protein belongs to the DeoC/FbaB aldolase family. DeoC type 1 subfamily.

Its subcellular location is the cytoplasm. It catalyses the reaction 2-deoxy-D-ribose 5-phosphate = D-glyceraldehyde 3-phosphate + acetaldehyde. It functions in the pathway carbohydrate degradation; 2-deoxy-D-ribose 1-phosphate degradation; D-glyceraldehyde 3-phosphate and acetaldehyde from 2-deoxy-alpha-D-ribose 1-phosphate: step 2/2. In terms of biological role, catalyzes a reversible aldol reaction between acetaldehyde and D-glyceraldehyde 3-phosphate to generate 2-deoxy-D-ribose 5-phosphate. This chain is Deoxyribose-phosphate aldolase, found in Streptococcus pyogenes serotype M4 (strain MGAS10750).